We begin with the raw amino-acid sequence, 53 residues long: UPF0391 membrane protein Bxeno_A1464 (53 aa).

The next 2 helical transmembrane spans lie at 5 to 25 (AAIF…GIAA) and 30 to 50 (IAKV…LMGV).

The protein belongs to the UPF0391 family.

It is found in the cell membrane. The protein is UPF0391 membrane protein Bxeno_A1464 of Paraburkholderia xenovorans (strain LB400).